A 201-amino-acid polypeptide reads, in one-letter code: Probable nicotinate-nucleotide adenylyltransferase (201 aa).

It belongs to the NadD family.

It catalyses the reaction nicotinate beta-D-ribonucleotide + ATP + H(+) = deamido-NAD(+) + diphosphate. The protein operates within cofactor biosynthesis; NAD(+) biosynthesis; deamido-NAD(+) from nicotinate D-ribonucleotide: step 1/1. Its function is as follows. Catalyzes the reversible adenylation of nicotinate mononucleotide (NaMN) to nicotinic acid adenine dinucleotide (NaAD). This is Probable nicotinate-nucleotide adenylyltransferase from Clostridium botulinum (strain ATCC 19397 / Type A).